Reading from the N-terminus, the 87-residue chain is Small ribosomal subunit protein bS20 (87 aa).

This sequence belongs to the bacterial ribosomal protein bS20 family.

Binds directly to 16S ribosomal RNA. In Geobacter sulfurreducens (strain ATCC 51573 / DSM 12127 / PCA), this protein is Small ribosomal subunit protein bS20.